The chain runs to 570 residues: MEFKYNGKVESIELNKYSKTLTQDPTQPATQAMYYGIGFKDEDFKKAQVGIVSMDWDGNPCNMHLGTLGSKIKNSVNQTDGLIGLQFHTIGVSDGIANGKLGMRYSLVSREVIADSIETNAGAEYYDAIVAVPGCDKNMPGSIIGMARLNRPSIMVYGGTIEHGEYKGEKLNIVSAFEALGQKITGNISDEDYHGVICNAIPGQGACGGMYTANTLAAAIETLGMSLPYSSSNPAVSQEKEDECDEIGLAIKNLLEKDIKPSDIMTKEAFENAITIVMVLGGSTNAVLHIIAMANAIGVEITQDDFQRISDVTPVLGDFKPSGKYMVEDLHKIGGVPAVLKYLLKEGKLHGDCLTVTGKTLAENVKTALDLDFESQDIMRPLENPIKATGHLQILYGNLAEGGSVAKISGKEGEFFKGTARVFDGEQHFIDGIESGRLHAGDVAVIRNIGPVGGPGMPEMLKPTSALIGAGLGKSCALITDGRFSGGTHGFVVGHIVPEAVEGGLIGLVEDDDIIEIDAVNNSISLKVADDEIARRRANYQKPAPKATRGVLAKFAKLTRPASEGCVTDL.

Cys61 provides a ligand contact to [2Fe-2S] cluster. Position 94 (Asp94) interacts with Mg(2+). Cys135 serves as a coordination point for [2Fe-2S] cluster. 2 residues coordinate Mg(2+): Asp136 and Lys137. The residue at position 137 (Lys137) is an N6-carboxylysine. Cys207 contributes to the [2Fe-2S] cluster binding site. Position 459 (Glu459) interacts with Mg(2+). Ser485 (proton acceptor) is an active-site residue.

The protein belongs to the IlvD/Edd family. As to quaternary structure, homodimer. Requires [2Fe-2S] cluster as cofactor. Mg(2+) is required as a cofactor.

The catalysed reaction is (2R)-2,3-dihydroxy-3-methylbutanoate = 3-methyl-2-oxobutanoate + H2O. It carries out the reaction (2R,3R)-2,3-dihydroxy-3-methylpentanoate = (S)-3-methyl-2-oxopentanoate + H2O. Its pathway is amino-acid biosynthesis; L-isoleucine biosynthesis; L-isoleucine from 2-oxobutanoate: step 3/4. It functions in the pathway amino-acid biosynthesis; L-valine biosynthesis; L-valine from pyruvate: step 3/4. Functionally, functions in the biosynthesis of branched-chain amino acids. Catalyzes the dehydration of (2R,3R)-2,3-dihydroxy-3-methylpentanoate (2,3-dihydroxy-3-methylvalerate) into 2-oxo-3-methylpentanoate (2-oxo-3-methylvalerate) and of (2R)-2,3-dihydroxy-3-methylbutanoate (2,3-dihydroxyisovalerate) into 2-oxo-3-methylbutanoate (2-oxoisovalerate), the penultimate precursor to L-isoleucine and L-valine, respectively. In Lactococcus lactis subsp. cremoris (strain MG1363), this protein is Dihydroxy-acid dehydratase.